The following is a 237-amino-acid chain: Speedy protein E4 (237 aa).

The segment at 1 to 61 (MASGQARPPF…KRKSEWSDES (61 aa)) is disordered.

It belongs to the Speedy/Ringo family. Predominantly expressed in testis.

This Homo sapiens (Human) protein is Speedy protein E4.